The following is a 332-amino-acid chain: Methionine synthase (332 aa).

Zn(2+)-binding residues include His211, Cys213, and Cys296.

It belongs to the archaeal MetE family. Requires Zn(2+) as cofactor.

Its pathway is amino-acid biosynthesis; L-methionine biosynthesis via de novo pathway. Catalyzes the transfer of a methyl group to L-homocysteine resulting in methionine formation. The physiological methyl donor is unknown. This Saccharolobus islandicus (strain Y.N.15.51 / Yellowstone #2) (Sulfolobus islandicus) protein is Methionine synthase.